We begin with the raw amino-acid sequence, 381 residues long: Cyclin-dependent kinase inhibitor CIP1 (381 aa).

The span at 1–11 (MLLERLHKRLH) shows a compositional bias: basic residues. The disordered stretch occupies residues 1–30 (MLLERLHKRLHAGSSRRSQENKDKNCKPED). Basic and acidic residues predominate over residues 17 to 30 (RSQENKDKNCKPED). Thr-65, Thr-69, and Thr-73 each carry phosphothreonine.

In terms of assembly, interact with the CDC28/CLN2 complex. Phosphorylated during S phase in a CDC28-dependent manner. Phosphorylated at Thr-65 and Thr-73 by HOG1 under osmotic stress. The phosphorylations of Thr-65 and Thr-73 are necessary for CIP1-induced growth inhibition.

The protein localises to the cytoplasm. It localises to the nucleus. Functionally, acts as an inhibitor of the CDC28/CLN2 cyclin-dependent kinase complex. Stabilizes the CDC28 inhibitor SIC1. Negatively regulates the G1/S phase transition. Contributes to osmostress-induced transitory G1 delay. The protein is Cyclin-dependent kinase inhibitor CIP1 of Saccharomyces cerevisiae (strain ATCC 204508 / S288c) (Baker's yeast).